A 181-amino-acid chain; its full sequence is uncharacterized protein (181 aa).

Residues Met-1 to Ala-19 form the signal peptide.

This is an uncharacterized protein from Treponema pallidum (strain Nichols).